Here is a 102-residue protein sequence, read N- to C-terminus: Putative septation protein SpoVG 1 (102 aa).

The protein belongs to the SpoVG family.

In terms of biological role, could be involved in septation. This is Putative septation protein SpoVG 1 from Listeria innocua serovar 6a (strain ATCC BAA-680 / CLIP 11262).